The chain runs to 158 residues: Transcription elongation factor GreA (158 aa).

Belongs to the GreA/GreB family.

Functionally, necessary for efficient RNA polymerase transcription elongation past template-encoded arresting sites. The arresting sites in DNA have the property of trapping a certain fraction of elongating RNA polymerases that pass through, resulting in locked ternary complexes. Cleavage of the nascent transcript by cleavage factors such as GreA or GreB allows the resumption of elongation from the new 3'terminus. GreA releases sequences of 2 to 3 nucleotides. This chain is Transcription elongation factor GreA, found in Bacillus licheniformis (strain ATCC 14580 / DSM 13 / JCM 2505 / CCUG 7422 / NBRC 12200 / NCIMB 9375 / NCTC 10341 / NRRL NRS-1264 / Gibson 46).